The sequence spans 173 residues: Cytochrome b6-f complex subunit 4, chloroplastic (173 aa).

A chloroplast-targeting transit peptide spans 1-14; that stretch reads ESALERRSSSVVMN. Helical transmembrane passes span 49–69, 108–128, and 144–164; these read LLYM…GLAV, LLGV…PFIE, and SVFL…TLPI.

It belongs to the cytochrome b family. PetD subfamily. In terms of assembly, the 4 large subunits of the cytochrome b6-f complex are cytochrome b6, subunit IV (17 kDa polypeptide, petD), cytochrome f and the Rieske protein, while the 4 small subunits are petG, petL, petM and petN. The complex functions as a dimer.

The protein resides in the plastid. It is found in the chloroplast thylakoid membrane. Functionally, component of the cytochrome b6-f complex, which mediates electron transfer between photosystem II (PSII) and photosystem I (PSI), cyclic electron flow around PSI, and state transitions. The sequence is that of Cytochrome b6-f complex subunit 4, chloroplastic from Euglena gracilis.